The sequence spans 385 residues: Neuropeptide Y receptor type 2 (385 aa).

At 1 to 54 the chain is on the extracellular side; it reads MGPLEAIGEENQTDEMKMELFTKLYLPRYTTPVSELALDPKPELKDSTTLVEVQ. Asparagine 11 carries N-linked (GlcNAc...) asparagine glycosylation. A helical membrane pass occupies residues 55–75; it reads IILIFAYCSIILLGVIGNSLV. Residues 76–90 lie on the Cytoplasmic side of the membrane; sequence IHVIIKFKSMRTVTN. The chain crosses the membrane as a helical span at residues 91-111; the sequence is FFIANLAVADLLVNTLCLPFT. The Extracellular segment spans residues 112 to 128; the sequence is LVYTLLGEWKLGPVLCH. Cysteine 127 and cysteine 207 are disulfide-bonded. Residues 129–149 traverse the membrane as a helical segment; that stretch reads LVPYAQALAVHVSTVTLTVIA. The Cytoplasmic segment spans residues 150 to 169; that stretch reads LDRHRCIVYHLESKISKRIS. A helical transmembrane segment spans residues 170–190; the sequence is FLIIGVAWAVSALLASPLAIF. Residues 191 to 221 lie on the Extracellular side of the membrane; it reads REYSLIEIIPDFKIVVCSEKWPGEGQLNYGT. A helical transmembrane segment spans residues 222-242; sequence IYSVSMLLIQYVLPLAIISYA. Over 243–273 the chain is Cytoplasmic; the sequence is YTRIWTKLKNHVSPGAGNDHYHHRRQKTTKM. Residues 274-294 form a helical membrane-spanning segment; sequence LVCVVVVFAVSWLPFHAFQLV. Residues 295 to 308 lie on the Extracellular side of the membrane; that stretch reads SDIDSQVLDLKEYK. Residues 309-329 form a helical membrane-spanning segment; that stretch reads LIYTVFHVIAMCSTFANPLLY. The Cytoplasmic portion of the chain corresponds to 330–385; the sequence is GWMNNNYRTAFLTAFQCEQRLDSIHPEVSAAFKARKKLEAKKSQFPGDSFTQPTNV. Cysteine 346 carries the S-palmitoyl cysteine lipid modification.

It belongs to the G-protein coupled receptor 1 family.

It is found in the cell membrane. Functionally, receptor for neuropeptide Y and peptide YY. The chain is Neuropeptide Y receptor type 2 (NPY2R) from Gallus gallus (Chicken).